The following is a 102-amino-acid chain: Small ribosomal subunit protein uS10 (102 aa).

It belongs to the universal ribosomal protein uS10 family. As to quaternary structure, part of the 30S ribosomal subunit.

Functionally, involved in the binding of tRNA to the ribosomes. This is Small ribosomal subunit protein uS10 from Streptococcus thermophilus (strain ATCC BAA-250 / LMG 18311).